The chain runs to 423 residues: Sphingomyelin phosphodiesterase 2 (423 aa).

Position 49 (Glu-49) interacts with Mg(2+). The active-site Proton acceptor is His-272. A run of 2 helical transmembrane segments spans residues 330 to 350 (VIGLGLLLLALLCVLAAGGGA) and 354 to 374 (AILLWTPSVGLVLWAGAFYLF). The segment at 400–423 (QDLGPEPQPALLLGQQEGDRTKEQ) is disordered.

Belongs to the neutral sphingomyelinase family. Mg(2+) is required as a cofactor.

The protein resides in the cell membrane. The enzyme catalyses a sphingomyelin + H2O = phosphocholine + an N-acylsphing-4-enine + H(+). It catalyses the reaction an N-(acyl)-sphingosylphosphocholine + H2O = an N-acyl-sphingoid base + phosphocholine + H(+). It carries out the reaction 1-O-octadecyl-sn-glycero-3-phosphocholine + H2O = 1-O-octadecyl-sn-glycerol + phosphocholine + H(+). The catalysed reaction is 1-O-hexadecyl-sn-glycero-3-phosphocholine + H2O = 1-O-hexadecyl-sn-glycerol + phosphocholine + H(+). The enzyme catalyses 1-hexadecanoyl-sn-glycero-3-phosphocholine + H2O = 1-hexadecanoyl-sn-glycerol + phosphocholine + H(+). It catalyses the reaction a sphingosylphosphocholine + H2O = a sphingoid base + phosphocholine + H(+). Its pathway is lipid metabolism; sphingolipid metabolism. In terms of biological role, catalyzes, at least in vitro, the hydrolysis of sphingomyelin to form ceramide and phosphocholine. Also hydrolyzes 1-O-alkyl-2-lyso-sn-glycero-3-phosphocholine (lyso-platelet-activating factor) in vivo. Also acts on 1-acyl-2-lyso-sn-glycero-3-phosphocholine (lyso-PC) and sphingosylphosphocholine. This chain is Sphingomyelin phosphodiesterase 2, found in Homo sapiens (Human).